Reading from the N-terminus, the 248-residue chain is Protein GrpE (248 aa).

The tract at residues A229–S248 is disordered. Residues A238–S248 show a composition bias toward polar residues.

This sequence belongs to the GrpE family. In terms of assembly, homodimer.

The protein localises to the cytoplasm. Its function is as follows. Participates actively in the response to hyperosmotic and heat shock by preventing the aggregation of stress-denatured proteins, in association with DnaK and GrpE. It is the nucleotide exchange factor for DnaK and may function as a thermosensor. Unfolded proteins bind initially to DnaJ; upon interaction with the DnaJ-bound protein, DnaK hydrolyzes its bound ATP, resulting in the formation of a stable complex. GrpE releases ADP from DnaK; ATP binding to DnaK triggers the release of the substrate protein, thus completing the reaction cycle. Several rounds of ATP-dependent interactions between DnaJ, DnaK and GrpE are required for fully efficient folding. In Nostoc sp. (strain PCC 7120 / SAG 25.82 / UTEX 2576), this protein is Protein GrpE.